Here is a 429-residue protein sequence, read N- to C-terminus: 4-hydroxyphenylacetate degradation bifunctional isomerase/decarboxylase (429 aa).

Approximate repeat units follow at residues 1-215 and 216-429; these read MKGT…NQTF and TWPL…ESAN. 3 residues coordinate a divalent metal cation: glutamate 276, glutamate 278, and aspartate 307.

The protein belongs to the FAH family. In terms of assembly, monomer. Requires Mg(2+) as cofactor.

The catalysed reaction is (2E,4Z)-5-hydroxypenta-2,4-diene-1,2,5-tricarboxylate = (3E,5R)-5-carboxy-2-oxohept-3-enedioate. The enzyme catalyses (3E,5R)-5-carboxy-2-oxohept-3-enedioate + H(+) = (4Z)-2-oxohept-4-enedioate + CO2. It participates in aromatic compound metabolism; 4-hydroxyphenylacetate degradation; pyruvate and succinate semialdehyde from 4-hydroxyphenylacetate: step 4/7. Its pathway is aromatic compound metabolism; 4-hydroxyphenylacetate degradation; pyruvate and succinate semialdehyde from 4-hydroxyphenylacetate: step 5/7. Its function is as follows. Decarboxylates OPET (5-oxo-pent-3-ene-1,2,5-tricarboxylic acid) into HHDD (2-hydroxy-hept-2,4-diene-1,7-dioate) and isomerizes it to OHED (2-oxo-hept-3-ene-1,7-dioate). In Salmonella dublin, this protein is 4-hydroxyphenylacetate degradation bifunctional isomerase/decarboxylase (hpaG).